The following is a 418-amino-acid chain: Transcription termination factor Rho (418 aa).

A Rho RNA-BD domain is found at 48 to 123; that stretch reads DIYGDGVLEI…LKVNDINFDR (76 aa). Residues 169-174, 181-186, and arginine 212 contribute to the ATP site; these read GKGQRG and KAGKTM.

It belongs to the Rho family. Homohexamer. The homohexamer assembles into an open ring structure.

In terms of biological role, facilitates transcription termination by a mechanism that involves Rho binding to the nascent RNA, activation of Rho's RNA-dependent ATPase activity, and release of the mRNA from the DNA template. In Allochromatium vinosum (strain ATCC 17899 / DSM 180 / NBRC 103801 / NCIMB 10441 / D) (Chromatium vinosum), this protein is Transcription termination factor Rho.